A 400-amino-acid polypeptide reads, in one-letter code: Argininosuccinate synthase (400 aa).

Ala8–Ser16 serves as a coordination point for ATP. Tyr87 provides a ligand contact to L-citrulline. Gly117 is a binding site for ATP. 3 residues coordinate L-aspartate: Thr119, Asn123, and Asp124. An L-citrulline-binding site is contributed by Asn123. Positions 127, 175, 260, and 272 each coordinate L-citrulline.

The protein belongs to the argininosuccinate synthase family. Type 1 subfamily. Homotetramer.

The protein localises to the cytoplasm. The enzyme catalyses L-citrulline + L-aspartate + ATP = 2-(N(omega)-L-arginino)succinate + AMP + diphosphate + H(+). Its pathway is amino-acid biosynthesis; L-arginine biosynthesis; L-arginine from L-ornithine and carbamoyl phosphate: step 2/3. The polypeptide is Argininosuccinate synthase (Mycobacterium sp. (strain JLS)).